An 837-amino-acid chain; its full sequence is Striatin-interacting protein 1 (837 aa).

At M1 the chain carries N-acetylmethionine. 2 disordered regions span residues M1–D67 and A333–P423. Residues P18 to A35 are compositionally biased toward pro residues. Positions P36 to G46 are enriched in low complexity. A compositionally biased stretch (basic and acidic residues) spans K47–E60. 3 positions are modified to phosphoserine: S59, S335, and S339. Over residues A333 to S343 the composition is skewed to low complexity. The span at K356–D377 shows a compositional bias: basic and acidic residues. The span at S378–L391 shows a compositional bias: acidic residues. S788 carries the post-translational modification Phosphoserine. Residues D796–Q837 form a required for STRIPAK core complex formation region.

The protein belongs to the STRIP family. As to quaternary structure, part of the core of STRIPAK complexes composed of PP2A catalytic and scaffolding subunits, the striatins (PP2A regulatory subunits), the striatin-associated proteins MOB4, STRIP1 and STRIP2, PDCD10 and members of the STE20 kinases, such as STK24 and STK26. The STRIPAK complex can be extended by adapter proteins such as SLMAP:SIKE1, CTTNBP2 or CTTNBP2NL. Interacts with CDC42BPB. Interacts with CTTNBP2NL.

It is found in the cytoplasm. In terms of biological role, plays a role in the regulation of cell morphology and cytoskeletal organization. Required in the cortical actin filament dynamics and cell shape. Part of the striatin-interacting phosphatase and kinase (STRIPAK) complexes. STRIPAK complexes have critical roles in protein (de)phosphorylation and are regulators of multiple signaling pathways including Hippo, MAPK, nuclear receptor and cytoskeleton remodeling. Different types of STRIPAK complexes are involved in a variety of biological processes such as cell growth, differentiation, apoptosis, metabolism and immune regulation. This chain is Striatin-interacting protein 1 (STRIP1), found in Pongo abelii (Sumatran orangutan).